The primary structure comprises 215 residues: Interleukin-12 subunit alpha (215 aa).

The first 22 residues, 1–22 (MCQSRYLLFLATLVLLNHLTSA), serve as a signal peptide directing secretion. 3 cysteine pairs are disulfide-bonded: cysteine 33–cysteine 106, cysteine 60–cysteine 192, and cysteine 81–cysteine 119. N-linked (GlcNAc...) asparagine glycosylation is found at asparagine 35, asparagine 89, and asparagine 167.

It belongs to the IL-6 superfamily. As to quaternary structure, heterodimer with IL12B; disulfide-linked. This heterodimer is known as interleukin IL-12. Heterodimer with EBI3/IL27B; not disulfide-linked. This heterodimer is known as interleukin IL-35. Interacts with NBR1; this interaction promotes IL-12 secretion.

Its subcellular location is the secreted. In terms of biological role, heterodimerizes with IL12B to form the IL-12 cytokine or with EBI3/IL27B to form the IL-35 cytokine. IL-12 is primarily produced by professional antigen-presenting cells (APCs) such as B-cells and dendritic cells (DCs) as well as macrophages and granulocytes and regulates T-cell and natural killer-cell responses, induces the production of interferon-gamma (IFN-gamma), favors the differentiation of T-helper 1 (Th1) cells and is an important link between innate resistance and adaptive immunity. Mechanistically, exerts its biological effects through a receptor composed of IL12R1 and IL12R2 subunits. Binding to the receptor results in the rapid tyrosine phosphorylation of a number of cellular substrates including the JAK family kinases TYK2 and JAK2. In turn, recruited STAT4 gets phosphorylated and translocates to the nucleus where it regulates cytokine/growth factor responsive genes. As part of IL-35, plays essential roles in maintaining the immune homeostasis of the liver microenvironment and also functions as an immune-suppressive cytokine. Mediates biological events through unconventional receptors composed of IL12RB2 and gp130/IL6ST heterodimers or homodimers. Signaling requires the transcription factors STAT1 and STAT4, which form a unique heterodimer that binds to distinct DNA sites. This chain is Interleukin-12 subunit alpha (Il12a), found in Rattus norvegicus (Rat).